The chain runs to 384 residues: Galactokinase (384 aa).

Position 34 to 37 (34 to 37 (EHTD)) interacts with substrate. Position 123 to 129 (123 to 129 (SSGLSSS)) interacts with ATP. Residues S129 and E161 each coordinate Mg(2+). D173 serves as the catalytic Proton acceptor. Y222 serves as a coordination point for substrate.

This sequence belongs to the GHMP kinase family. GalK subfamily.

The protein resides in the cytoplasm. The enzyme catalyses alpha-D-galactose + ATP = alpha-D-galactose 1-phosphate + ADP + H(+). Its pathway is carbohydrate metabolism; galactose metabolism. Functionally, catalyzes the transfer of the gamma-phosphate of ATP to D-galactose to form alpha-D-galactose-1-phosphate (Gal-1-P). This Actinobacillus pleuropneumoniae (Haemophilus pleuropneumoniae) protein is Galactokinase.